A 745-amino-acid polypeptide reads, in one-letter code: Jacalin-related lectin 4 (745 aa).

Jacalin-type lectin domains lie at alanine 2 to proline 148, proline 151 to proline 294, alanine 307 to threonine 448, proline 451 to arginine 594, and alanine 601 to proline 744.

The protein belongs to the jacalin lectin family.

This Arabidopsis thaliana (Mouse-ear cress) protein is Jacalin-related lectin 4 (JAL4).